The primary structure comprises 869 residues: Valine--tRNA ligase (869 aa).

The short motif at 47 to 57 (PYPTGNFHIGN) is the 'HIGH' region element. A 'KMSKS' region motif is present at residues 521-525 (KMSKS). ATP is bound at residue K524.

The protein belongs to the class-I aminoacyl-tRNA synthetase family. ValS type 2 subfamily.

It is found in the cytoplasm. The catalysed reaction is tRNA(Val) + L-valine + ATP = L-valyl-tRNA(Val) + AMP + diphosphate. Its function is as follows. Catalyzes the attachment of valine to tRNA(Val). As ValRS can inadvertently accommodate and process structurally similar amino acids such as threonine, to avoid such errors, it has a 'posttransfer' editing activity that hydrolyzes mischarged Thr-tRNA(Val) in a tRNA-dependent manner. The polypeptide is Valine--tRNA ligase (Methanosarcina mazei (strain ATCC BAA-159 / DSM 3647 / Goe1 / Go1 / JCM 11833 / OCM 88) (Methanosarcina frisia)).